We begin with the raw amino-acid sequence, 214 residues long: Orotate phosphoribosyltransferase (214 aa).

Position 26 (Lys26) interacts with 5-phospho-alpha-D-ribose 1-diphosphate. 34-35 (FF) lines the orotate pocket. 5-phospho-alpha-D-ribose 1-diphosphate-binding positions include 72–73 (YK), Arg99, Lys100, Lys103, His105, and 124–132 (DDVITAGTA). Orotate is bound by residues Thr128 and Arg157.

The protein belongs to the purine/pyrimidine phosphoribosyltransferase family. PyrE subfamily. As to quaternary structure, homodimer. Mg(2+) serves as cofactor.

The enzyme catalyses orotidine 5'-phosphate + diphosphate = orotate + 5-phospho-alpha-D-ribose 1-diphosphate. It participates in pyrimidine metabolism; UMP biosynthesis via de novo pathway; UMP from orotate: step 1/2. Its function is as follows. Catalyzes the transfer of a ribosyl phosphate group from 5-phosphoribose 1-diphosphate to orotate, leading to the formation of orotidine monophosphate (OMP). The polypeptide is Orotate phosphoribosyltransferase (Pseudomonas fluorescens (strain Pf0-1)).